The following is a 95-amino-acid chain: Embryonic abundant protein 1 (95 aa).

A compositionally biased stretch (polar residues) spans 1–10 (MASGQQQQGR). Residues 1 to 95 (MASGQQQQGR…IDESKYKTKS (95 aa)) form a disordered region. 2 stretches are compositionally biased toward basic and acidic residues: residues 40–64 (AEGR…EMGR) and 75–95 (GGER…KTKS).

This sequence belongs to the small hydrophilic plant seed protein family. Expressed in dry seeds and immature embryos.

Em protein may act as a cytoplasm protectant during desiccation. The protein is Embryonic abundant protein 1 (EMP1) of Oryza sativa subsp. japonica (Rice).